A 211-amino-acid polypeptide reads, in one-letter code: Guanylate kinase (211 aa).

The region spanning 7 to 187 (GLLIILSGPS…AADRIIAIIR (181 aa)) is the Guanylate kinase-like domain. 14–21 (GPSGVGKA) contacts ATP.

The protein belongs to the guanylate kinase family.

It is found in the cytoplasm. It carries out the reaction GMP + ATP = GDP + ADP. In terms of biological role, essential for recycling GMP and indirectly, cGMP. The chain is Guanylate kinase from Aster yellows witches'-broom phytoplasma (strain AYWB).